The following is a 396-amino-acid chain: uncharacterized protein (396 aa).

The protein belongs to the mycobacterial PPE family.

This is an uncharacterized protein from Mycobacterium tuberculosis (strain ATCC 25618 / H37Rv).